The primary structure comprises 176 residues: NAD(P)H-quinone oxidoreductase subunit J (176 aa).

Polar residues-rich tracts occupy residues 1-12 and 20-30; these read MEKDSQATSSDT and ISQSLSKDGIP. The segment at 1–30 is disordered; that stretch reads MEKDSQATSSDTSIEKEGVISQSLSKDGIP.

The protein belongs to the complex I 30 kDa subunit family. In terms of assembly, NDH-1 can be composed of about 15 different subunits; different subcomplexes with different compositions have been identified which probably have different functions.

It localises to the cellular thylakoid membrane. The catalysed reaction is a plastoquinone + NADH + (n+1) H(+)(in) = a plastoquinol + NAD(+) + n H(+)(out). It catalyses the reaction a plastoquinone + NADPH + (n+1) H(+)(in) = a plastoquinol + NADP(+) + n H(+)(out). Its function is as follows. NDH-1 shuttles electrons from an unknown electron donor, via FMN and iron-sulfur (Fe-S) centers, to quinones in the respiratory and/or the photosynthetic chain. The immediate electron acceptor for the enzyme in this species is believed to be plastoquinone. Couples the redox reaction to proton translocation, and thus conserves the redox energy in a proton gradient. Cyanobacterial NDH-1 also plays a role in inorganic carbon-concentration. The protein is NAD(P)H-quinone oxidoreductase subunit J of Prochlorococcus marinus (strain AS9601).